We begin with the raw amino-acid sequence, 236 residues long: Uridylate kinase (236 aa).

10 to 13 (KLSG) is an ATP binding site. Glycine 52 contributes to the UMP binding site. Positions 53 and 57 each coordinate ATP. Residues aspartate 72 and 133–140 (TGNPFFTT) contribute to the UMP site. Residues threonine 160, tyrosine 166, and aspartate 169 each contribute to the ATP site.

Belongs to the UMP kinase family. Homohexamer.

Its subcellular location is the cytoplasm. The catalysed reaction is UMP + ATP = UDP + ADP. Its pathway is pyrimidine metabolism; CTP biosynthesis via de novo pathway; UDP from UMP (UMPK route): step 1/1. Inhibited by UTP. In terms of biological role, catalyzes the reversible phosphorylation of UMP to UDP. The sequence is that of Uridylate kinase from Polaromonas naphthalenivorans (strain CJ2).